The chain runs to 132 residues: Small ribosomal subunit protein uS8 (132 aa).

The protein belongs to the universal ribosomal protein uS8 family. As to quaternary structure, part of the 30S ribosomal subunit. Contacts proteins S5 and S12.

Its function is as follows. One of the primary rRNA binding proteins, it binds directly to 16S rRNA central domain where it helps coordinate assembly of the platform of the 30S subunit. The sequence is that of Small ribosomal subunit protein uS8 from Gluconobacter oxydans (strain 621H) (Gluconobacter suboxydans).